Reading from the N-terminus, the 367-residue chain is Ribosomal lysine N-methyltransferase 5 (367 aa).

Positions 55–74 (EGGRKKKRVRRRNKASSVEE) are disordered. Over residues 58–68 (RKKKRVRRRNK) the composition is skewed to basic residues. S-adenosyl-L-methionine-binding positions include W110, 170–172 (GAG), D192, W256, and M288.

This sequence belongs to the class I-like SAM-binding methyltransferase superfamily. RKM5 family.

Functionally, S-adenosyl-L-methionine-dependent protein-lysine N-methyltransferase that monomethylates 60S ribosomal protein L1 (RPL1A and RPL1B) at 'Lys-46'. This Saccharomyces cerevisiae (strain RM11-1a) (Baker's yeast) protein is Ribosomal lysine N-methyltransferase 5 (RKM5).